Consider the following 295-residue polypeptide: Small ribosomal subunit biogenesis GTPase RsgA (295 aa).

One can recognise a CP-type G domain in the interval 65 to 223; it reads KNQLVRPPVA…VLDTPGFTAL (159 aa). GTP is bound by residues 114-117 and 165-173; these read NKVD and GPSGVGKSS. Residues Cys246, Cys251, His253, and Cys259 each contribute to the Zn(2+) site.

The protein belongs to the TRAFAC class YlqF/YawG GTPase family. RsgA subfamily. Monomer. Associates with 30S ribosomal subunit, binds 16S rRNA. Requires Zn(2+) as cofactor.

It localises to the cytoplasm. Its function is as follows. One of several proteins that assist in the late maturation steps of the functional core of the 30S ribosomal subunit. Helps release RbfA from mature subunits. May play a role in the assembly of ribosomal proteins into the subunit. Circularly permuted GTPase that catalyzes slow GTP hydrolysis, GTPase activity is stimulated by the 30S ribosomal subunit. The polypeptide is Small ribosomal subunit biogenesis GTPase RsgA (Caldanaerobacter subterraneus subsp. tengcongensis (strain DSM 15242 / JCM 11007 / NBRC 100824 / MB4) (Thermoanaerobacter tengcongensis)).